Here is a 1496-residue protein sequence, read N- to C-terminus: Chromosome partition protein MukB (1496 aa).

63-70 provides a ligand contact to ATP; that stretch reads GGNGAGKS. Coiled-coil stretches lie at residues 328-493 and 536-632; these read KLEL…QRLS and KMQA…APAW. Residues 694–811 form a flexible hinge region; it reads PDGSDDVRLN…EVPLFGRAAR (118 aa). 2 coiled-coil regions span residues 861 to 1171 and 1235 to 1291; these read NPEE…SAEE and IDAI…LQNI. The segment covering 1082 to 1091 has biased composition (basic and acidic residues); sequence RARSRRDELQ. Residues 1082–1101 form a disordered region; the sequence is RARSRRDELQQRLSQQRSRK.

It belongs to the SMC family. MukB subfamily. As to quaternary structure, homodimerization via its hinge domain. Binds to DNA via its C-terminal region. Interacts, and probably forms a ternary complex, with MukE and MukF via its C-terminal region. The complex formation is stimulated by calcium or magnesium. Interacts with tubulin-related protein FtsZ.

It is found in the cytoplasm. Its subcellular location is the nucleoid. Its function is as follows. Plays a central role in chromosome condensation, segregation and cell cycle progression. Functions as a homodimer, which is essential for chromosome partition. Involved in negative DNA supercoiling in vivo, and by this means organize and compact chromosomes. May achieve or facilitate chromosome segregation by condensation DNA from both sides of a centrally located replisome during cell division. This Actinobacillus pleuropneumoniae serotype 7 (strain AP76) protein is Chromosome partition protein MukB.